The chain runs to 322 residues: uncharacterized protein (322 aa).

This is an uncharacterized protein from Aquifex aeolicus (strain VF5).